The sequence spans 397 residues: Guanine nucleotide-binding protein G(s) subunit alpha (397 aa).

The segment at 1 to 23 is disordered; it reads MGCLGNSKTEDQRNEEKAQREAN. A lipid anchor (N-palmitoyl glycine) is attached at Gly2. Cys3 carries the S-palmitoyl cysteine lipid modification. Positions 8–23 are enriched in basic and acidic residues; the sequence is KTEDQRNEEKAQREAN. One can recognise a G-alpha domain in the interval 39–397; it reads ATHRLLLLGA…RMHLRQYELL (359 aa). Residues 42–55 form a G1 motif region; that stretch reads RLLLLGAGESGKST. Residues 47–55, 182–189, 208–212, 277–280, and Ala369 contribute to the GTP site; these read GAGESGKST, LLRCRVLT, DVGGQ, and NKQD. Mg(2+) is bound by residues Ser54 and Thr189. The tract at residues 181–189 is G2 motif; the sequence is DLLRCRVLT. Positions 204 to 213 are G3 motif; the sequence is FHMFDVGGQR. The segment at 273-280 is G4 motif; it reads ILFLNKQD. The segment at 367–372 is G5 motif; sequence TCAVDT.

It belongs to the G-alpha family. G(s) subfamily. In terms of assembly, heterotrimeric G proteins are composed of 3 units; alpha, beta and gamma. The alpha chain contains the guanine nucleotide binding site. Interacts with CRY1; the interaction may block GPCR-mediated regulation of cAMP concentrations. Interacts with ADCY6 and stimulates its adenylyl cyclase activity. Interacts with ADCY2 and ADCY5. Stimulates the ADCY5 adenylyl cyclase activity. Interaction with SASH1.

It is found in the cell membrane. In terms of biological role, guanine nucleotide-binding proteins (G proteins) function as transducers in numerous signaling pathways controlled by G protein-coupled receptors (GPCRs). Signaling involves the activation of adenylyl cyclases, resulting in increased levels of the signaling molecule cAMP. GNAS functions downstream of several GPCRs, including beta-adrenergic receptors. Stimulates the Ras signaling pathway via RAPGEF2. In Sus scrofa (Pig), this protein is Guanine nucleotide-binding protein G(s) subunit alpha (GNAS).